A 233-amino-acid chain; its full sequence is 7-cyano-7-deazaguanine synthase (233 aa).

7–17 (CSGGLDSVSLA) is a binding site for ATP. Zn(2+)-binding residues include Cys185, Cys193, Cys196, and Cys199.

The protein belongs to the QueC family. The cofactor is Zn(2+).

The catalysed reaction is 7-carboxy-7-deazaguanine + NH4(+) + ATP = 7-cyano-7-deazaguanine + ADP + phosphate + H2O + H(+). The protein operates within purine metabolism; 7-cyano-7-deazaguanine biosynthesis. Functionally, catalyzes the ATP-dependent conversion of 7-carboxy-7-deazaguanine (CDG) to 7-cyano-7-deazaguanine (preQ(0)). This is 7-cyano-7-deazaguanine synthase from Paracoccus denitrificans (strain Pd 1222).